Here is a 53-residue protein sequence, read N- to C-terminus: Metallocarboxypeptidase inhibitor b (53 aa).

3 cysteine pairs are disulfide-bonded: Cys9–Cys23, Cys15–Cys51, and Cys27–Cys38. Ala53 provides a ligand contact to Zn(2+).

Its function is as follows. Metallocarboxypeptidase inhibitor. Has an inhibitory effect on bovine CPA1 and porcine CPB1. Does not inhibit D.melanogaster svr (carboxypeptidase D). Shows no activity against serine proteases subtilisin or bovine trypsin, cysteine protease papain, and aspartyl protease porcine pepsin. The polypeptide is Metallocarboxypeptidase inhibitor b (Nerita versicolor (Four-tooth nerite)).